A 592-amino-acid polypeptide reads, in one-letter code: Transducer of Cdc42-dependent actin assembly protein 1 homolog (592 aa).

The 265-residue stretch at 3-267 (DSCSWDQLWD…DIGLIDPSRD (265 aa)) folds into the F-BAR domain. 2 disordered regions span residues 343–366 (FGGG…QQRA) and 447–519 (SATS…DELY). Residues 359–436 (TLPPQQRARK…IQKFKILLDD (78 aa)) form the REM-1 domain. The stretch at 363–441 (QQRARKIAGK…ILLDDVNAQL (79 aa)) forms a coiled coil. Over residues 447–457 (SATSVGGSDTP) the composition is skewed to polar residues. Residues 459–474 (SIRSVSSASSGVTSRV) are compositionally biased toward low complexity. The segment covering 495–510 (FSGSNGGSDTDPTING) has biased composition (polar residues). An SH3 domain is found at 527-589 (PVLGEAIAQF…PSSYLKVTWF (63 aa)).

It belongs to the FNBP1 family. Interacts (via SH3 domain) with wsp-1. Interacts with cdc-42 and (via SH3 domain) with wve-1. As to expression, expressed in the germline and specifically in the gonads.

The protein resides in the cell junction. It localises to the apical cell membrane. It is found in the basolateral cell membrane. Its subcellular location is the cytoplasmic vesicle. The protein localises to the cytoplasm. The protein resides in the perinuclear region. It localises to the recycling endosome. Plays a role in protein trafficking, actin organization and embryonic morphogenesis. Potentially acts as a cdc-42 effector. May play a role in hypodermal P-cell nuclear positioning. Together with toca-2, is required for protein trafficking regulating yolk protein clathrin-mediated endocytosis by oocytes during oogenesis and retrograde recycling and the sorting of recycling endosome cargo proteins such as mig-14. Also, together with toca-2, controls the distribution of actin at cell junctions. The sequence is that of Transducer of Cdc42-dependent actin assembly protein 1 homolog from Caenorhabditis elegans.